A 524-amino-acid chain; its full sequence is AAA ATPase forming ring-shaped complexes (524 aa).

The disordered stretch occupies residues 1–29 (MGMGQEKHTDAASQSRDPEAVAAHENDQL). A coiled-coil region spans residues 22–59 (AAHENDQLRQRNHALAKALTRATEELRKAKAQLEQFMA). An ATP-binding site is contributed by 250 to 255 (GNGKTL).

Belongs to the AAA ATPase family. Homohexamer. Assembles into a hexameric ring structure.

The sequence is that of AAA ATPase forming ring-shaped complexes from Bifidobacterium animalis subsp. lactis (strain BB-12).